The primary structure comprises 305 residues: Virulence plasmid integrase pGP7-D (305 aa).

Residues 13-99 (LTFGDASEIW…CYISFTKFLY (87 aa)) enclose the Core-binding (CB) domain. The 179-residue stretch at 127-305 (IKTESISKQE…SPLVQTPPIL (179 aa)) folds into the Tyr recombinase domain. Residues Lys-188 and Arg-257 contribute to the active site. The active-site O-(3'-phospho-DNA)-tyrosine intermediate is the Tyr-289.

Belongs to the 'phage' integrase family.

The protein is Virulence plasmid integrase pGP7-D of Chlamydia trachomatis serovar L2 (strain ATCC VR-902B / DSM 19102 / 434/Bu).